The primary structure comprises 85 residues: Large ribosomal subunit protein bL27 (85 aa).

This sequence belongs to the bacterial ribosomal protein bL27 family.

The polypeptide is Large ribosomal subunit protein bL27 (Xylella fastidiosa (strain 9a5c)).